The sequence spans 664 residues: Bifunctional polymyxin resistance protein ArnA (664 aa).

The segment at 1–308 (MSTKAVVFAY…EFGLVAGSQM (308 aa)) is formyltransferase ArnAFT. His106 functions as the Proton donor; for formyltransferase activity in the catalytic mechanism. (6R)-10-formyltetrahydrofolate-binding positions include Arg116 and 138–142 (VKRAD). The segment at 318–664 (RRTRVLILGV…EAMAEKADQC (347 aa)) is dehydrogenase ArnADH. Residues Asp351 and 372 to 373 (DI) contribute to the NAD(+) site. UDP-alpha-D-glucuronate contacts are provided by residues Ala397, Tyr402, and 436–437 (TS). The active-site Proton acceptor; for decarboxylase activity is Glu438. Residues Arg464, Asn495, 529-538 (RLVDGGAQKR), and Tyr616 each bind UDP-alpha-D-glucuronate. The Proton donor; for decarboxylase activity role is filled by Arg622.

The protein in the N-terminal section; belongs to the Fmt family. UDP-L-Ara4N formyltransferase subfamily. This sequence in the C-terminal section; belongs to the NAD(P)-dependent epimerase/dehydratase family. UDP-glucuronic acid decarboxylase subfamily. As to quaternary structure, homohexamer, formed by a dimer of trimers.

The enzyme catalyses UDP-alpha-D-glucuronate + NAD(+) = UDP-beta-L-threo-pentopyranos-4-ulose + CO2 + NADH. It catalyses the reaction UDP-4-amino-4-deoxy-beta-L-arabinose + (6R)-10-formyltetrahydrofolate = UDP-4-deoxy-4-formamido-beta-L-arabinose + (6S)-5,6,7,8-tetrahydrofolate + H(+). The protein operates within nucleotide-sugar biosynthesis; UDP-4-deoxy-4-formamido-beta-L-arabinose biosynthesis; UDP-4-deoxy-4-formamido-beta-L-arabinose from UDP-alpha-D-glucuronate: step 1/3. It participates in nucleotide-sugar biosynthesis; UDP-4-deoxy-4-formamido-beta-L-arabinose biosynthesis; UDP-4-deoxy-4-formamido-beta-L-arabinose from UDP-alpha-D-glucuronate: step 3/3. It functions in the pathway bacterial outer membrane biogenesis; lipopolysaccharide biosynthesis. Its function is as follows. Bifunctional enzyme that catalyzes the oxidative decarboxylation of UDP-glucuronic acid (UDP-GlcUA) to UDP-4-keto-arabinose (UDP-Ara4O) and the addition of a formyl group to UDP-4-amino-4-deoxy-L-arabinose (UDP-L-Ara4N) to form UDP-L-4-formamido-arabinose (UDP-L-Ara4FN). The modified arabinose is attached to lipid A and is required for resistance to polymyxin and cationic antimicrobial peptides. In Pseudomonas syringae pv. syringae (strain B728a), this protein is Bifunctional polymyxin resistance protein ArnA.